A 1275-amino-acid chain; its full sequence is Surfactin synthase subunit 3 (1275 aa).

In terms of domain architecture, Carrier spans 968–1043; it reads GPRNEMEETI…GISAYLKNGG (76 aa). S1003 is subject to O-(pantetheine 4'-phosphoryl)serine. Positions 1059-1271 are thioesterase; sequence QIIFAFPPVL…ILLEFLNTQT (213 aa). Residues S1120, D1147, and H1247 contribute to the active site.

This sequence belongs to the ATP-dependent AMP-binding enzyme family. Pantetheine 4'-phosphate is required as a cofactor.

It participates in antibiotic biosynthesis; surfactin biosynthesis. Probably activates a leucine. The protein is Surfactin synthase subunit 3 (srfAC) of Bacillus subtilis (strain 168).